A 142-amino-acid chain; its full sequence is Small ribosomal subunit protein bS6 (142 aa).

Residues 110–142 are disordered; that stretch reads NKKPSHAKEKHEKTEHAHSHHAEEAKSTESHSE.

Belongs to the bacterial ribosomal protein bS6 family.

Its function is as follows. Binds together with bS18 to 16S ribosomal RNA. This is Small ribosomal subunit protein bS6 from Helicobacter pylori (strain G27).